Consider the following 91-residue polypeptide: Teretoxin Tan6.2 (91 aa).

The signal sequence occupies residues 1-21; it reads MATSGRLLCVCLVLGLVFGSL. Residues 22–50 constitute a propeptide that is removed on maturation; that stretch reads GYPVMEKKRAGKNFDLGTIANWAWQIGEK.

This sequence belongs to the teretoxin M (TM) superfamily. Post-translationally, contains 3 disulfide bonds. In terms of tissue distribution, expressed by the venom duct.

It localises to the secreted. This is Teretoxin Tan6.2 from Terebra anilis (Auger snail).